Here is a 430-residue protein sequence, read N- to C-terminus: UDP-N-acetylglucosamine 1-carboxyvinyltransferase 1 (430 aa).

22-23 (KN) contributes to the phosphoenolpyruvate binding site. Arg-93 is a UDP-N-acetyl-alpha-D-glucosamine binding site. Cys-117 functions as the Proton donor in the catalytic mechanism. Residue Cys-117 is modified to 2-(S-cysteinyl)pyruvic acid O-phosphothioketal. UDP-N-acetyl-alpha-D-glucosamine-binding positions include 122 to 126 (RPVDL), Asp-305, and Val-327.

It belongs to the EPSP synthase family. MurA subfamily.

It localises to the cytoplasm. The enzyme catalyses phosphoenolpyruvate + UDP-N-acetyl-alpha-D-glucosamine = UDP-N-acetyl-3-O-(1-carboxyvinyl)-alpha-D-glucosamine + phosphate. Its pathway is cell wall biogenesis; peptidoglycan biosynthesis. Cell wall formation. Adds enolpyruvyl to UDP-N-acetylglucosamine. This is UDP-N-acetylglucosamine 1-carboxyvinyltransferase 1 from Listeria monocytogenes serotype 4b (strain F2365).